The chain runs to 91 residues: Uteroglobin (91 aa).

The N-terminal stretch at 1-21 (MKLAITLALVTLALLCSPASA) is a signal peptide.

This sequence belongs to the secretoglobin family. Antiparallel homodimer; disulfide-linked. Interaction with LMBR1L is controversial. In terms of tissue distribution, synthesized in the uterus and lung.

Its subcellular location is the secreted. In terms of biological role, uteroglobin binds progesterone specifically and with high affinity. It may regulate progesterone concentrations reaching the blastocyst. It is also a potent inhibitor of phospholipase A2. The chain is Uteroglobin (SCGB1A1) from Oryctolagus cuniculus (Rabbit).